A 150-amino-acid chain; its full sequence is MTDQVLAEQRIGQNTEVTLHFALRLENGDTVDSTFDKAPATFKVGDGNLLPGFEAALFGFKAGDKRTLQILPENAFGQPNPQNVQIIPRSQFQNMDLSEGLLVIFNDAANTELPGVVKAFDDAQVTIDFNHPLAGKTLTFDVEIIDVKAL.

Residues 14 to 88 (NTEVTLHFAL…PNPQNVQIIP (75 aa)) enclose the PPIase FKBP-type domain.

This sequence belongs to the FKBP-type PPIase family.

The enzyme catalyses [protein]-peptidylproline (omega=180) = [protein]-peptidylproline (omega=0). Its function is as follows. PPIases accelerate the folding of proteins. This chain is Probable FKBP-type 16 kDa peptidyl-prolyl cis-trans isomerase (yaaD), found in Pseudomonas fluorescens.